A 699-amino-acid chain; its full sequence is Envelope glycoprotein G (699 aa).

The first 22 residues, 1-22 (MHAIAPRLLLLFVLSGLPGTRG), serve as a signal peptide directing secretion. At 23–650 (GSGVPGPINP…WFLTASPALD (628 aa)) the chain is on the virion surface side. N-linked (GlcNAc...) asparagine; by host glycans are attached at residues asparagine 104 and asparagine 163. 2 disordered regions span residues 302-390 (PGAL…TTPP) and 403-632 (TPEE…PSGP). A compositionally biased stretch (basic and acidic residues) spans 323–336 (LRTDPEGVDPDVRA). Residues 348-359 (EDTSSDSPTSAP) are compositionally biased toward polar residues. Low complexity-rich tracts occupy residues 376–390 (DPSA…TTPP) and 403–447 (TPEE…AKTP). A glycan (N-linked (GlcNAc...) asparagine; by host) is linked at asparagine 437. Pro residues-rich tracts occupy residues 448-459 (PTTPAPTTPPPT) and 467-482 (PTTP…PATP). The segment covering 483 to 531 (GPVGASAAPTADSPLTASPPATAPGPSAANVSVAATTATPGTRGTARTP) has biased composition (low complexity). A glycan (N-linked (GlcNAc...) asparagine; by host) is linked at asparagine 512. A compositionally biased stretch (pro residues) spans 544 to 554 (DAPPGSPAPPP). Residues 562–578 (EEFEGAGDGEPPEDDDS) show a composition bias toward acidic residues. The segment covering 589 to 605 (PNKPPPARPGPIRPTLP) has biased composition (pro residues). The helical transmembrane segment at 651 to 671 (ILFIISTTIHTAAFVCLVALA) threads the bilayer. Over 672-699 (AQLWRGRAGRRRYAHPSVRYVCLPPERD) the chain is Intravirion.

It belongs to the alphaherpesvirinae glycoprotein G family.

The protein localises to the virion membrane. In terms of biological role, chemokine-binding protein that inhibits neutrophils' chemotaxis. This chain is Envelope glycoprotein G (gG), found in Human herpesvirus 2 (strain HG52) (HHV-2).